The chain runs to 101 residues: Small ribosomal subunit protein bS16 (101 aa).

The protein belongs to the bacterial ribosomal protein bS16 family.

This is Small ribosomal subunit protein bS16 from Ureaplasma urealyticum serovar 10 (strain ATCC 33699 / Western).